The chain runs to 1036 residues: Protein translocase subunit SecA, chloroplastic (1036 aa).

The N-terminal 76 residues, 1 to 76 (MESCARSASQ…KIGELMQVRA (76 aa)), are a transit peptide targeting the chloroplast. Position 186–193 (186–193 (MRTGEGKT)) interacts with ATP. Residues 995–1036 (NQEQQQKGKPDSSNVENKRIGDANLNPVSVTESPSSDSPQNT) form a disordered region. Residues 1000–1015 (QKGKPDSSNVENKRIG) are compositionally biased toward basic and acidic residues. Residues 1020-1036 (NPVSVTESPSSDSPQNT) are compositionally biased toward polar residues.

This sequence belongs to the SecA family.

It localises to the plastid. It is found in the chloroplast stroma. Its subcellular location is the chloroplast thylakoid membrane. It catalyses the reaction ATP + H2O + chloroplast-proteinSide 1 = ADP + phosphate + chloroplast-proteinSide 2.. Functionally, has a central role in coupling the hydrolysis of ATP to the transfer of proteins across the thylakoid membrane. The protein is Protein translocase subunit SecA, chloroplastic of Spinacia oleracea (Spinach).